The following is a 188-amino-acid chain: Elongation factor P (188 aa).

It belongs to the elongation factor P family.

The protein resides in the cytoplasm. Its pathway is protein biosynthesis; polypeptide chain elongation. Functionally, involved in peptide bond synthesis. Stimulates efficient translation and peptide-bond synthesis on native or reconstituted 70S ribosomes in vitro. Probably functions indirectly by altering the affinity of the ribosome for aminoacyl-tRNA, thus increasing their reactivity as acceptors for peptidyl transferase. This Exiguobacterium sp. (strain ATCC BAA-1283 / AT1b) protein is Elongation factor P.